The sequence spans 534 residues: Calcium-dependent protein kinase 29 (534 aa).

Residues 1 to 72 (MGFCFSKFGK…STSSGSQIGP (72 aa)) are disordered. Gly-2 is lipidated: N-myristoyl glycine. Residues 16 to 27 (IPISSSSDSSPP) are compositionally biased toward low complexity. The segment covering 49–63 (NPQPKPKPAPPPPPS) has biased composition (pro residues). One can recognise a Protein kinase domain in the interval 85–343 (YDLHKELGRG…AAEALEHPWM (259 aa)). ATP-binding positions include 91–99 (LGRGQFGIT) and Lys-114. Asp-209 functions as the Proton acceptor in the catalytic mechanism. Ser-249 is subject to Phosphoserine. Residues 348-378 (ISDKPINSAVLVRMKQFRAMNKLKKLALKVI) are autoinhibitory domain. 4 consecutive EF-hand domains span residues 385-420 (EEIK…LGSK), 421-456 (LTES…RHRL), 457-492 (EKEE…YGMG), and 493-527 (DDAT…GTTD). Asp-398, Asp-400, Ser-402, Thr-404, Glu-409, Asp-434, Asp-436, Ser-438, Thr-440, Glu-445, Asp-470, Asp-472, Ser-474, Glu-481, Asp-505, Asp-507, Asp-509, Arg-511, and Glu-516 together coordinate Ca(2+).

Belongs to the protein kinase superfamily. Ser/Thr protein kinase family. CDPK subfamily.

The protein localises to the membrane. It catalyses the reaction L-seryl-[protein] + ATP = O-phospho-L-seryl-[protein] + ADP + H(+). The catalysed reaction is L-threonyl-[protein] + ATP = O-phospho-L-threonyl-[protein] + ADP + H(+). With respect to regulation, activated by calcium. Autophosphorylation may play an important role in the regulation of the kinase activity. May play a role in signal transduction pathways that involve calcium as a second messenger. The protein is Calcium-dependent protein kinase 29 (CPK29) of Arabidopsis thaliana (Mouse-ear cress).